Reading from the N-terminus, the 537-residue chain is Putative cysteine ligase BshC (537 aa).

Positions 422 to 450 (IEKVEGMIEQQRRLNQDLLDEVAGNQNNI) form a coiled coil.

Belongs to the BshC family.

Involved in bacillithiol (BSH) biosynthesis. May catalyze the last step of the pathway, the addition of cysteine to glucosamine malate (GlcN-Mal) to generate BSH. In Staphylococcus aureus (strain bovine RF122 / ET3-1), this protein is Putative cysteine ligase BshC.